The primary structure comprises 810 residues: RING finger protein unkempt homolog (810 aa).

The interval 1–24 (MSKGPGPGGSAASSAPPAATAQVL) is disordered. Positions 10 to 19 (SAASSAPPAA) are enriched in low complexity. 5 consecutive C3H1-type zinc fingers follow at residues 84–113 (YSPDVYCTKYDEATGLCPEGDECPFLHRTT), 124–154 (YYKTGICIHETDSKGNCTKNGLHCAFAHGPH), 215–241 (NYKTEPCKKPPRLCRQGYACPYYHNSK), 251–285 (KYRSSPCPNVKHGDEWGDPGKCENGDACQYCHTRT), and 293–321 (IYKSTKCNDMQQSGSCPRGPFCAFAHVEQ). A disordered region spans residues 239–265 (NSKDRRRSPRKHKYRSSPCPNVKHGDE). Ser240 carries the post-translational modification Phosphoserine. Positions 241 to 253 (KDRRRSPRKHKYR) are enriched in basic residues. The tract at residues 324 to 343 (LSDDLQPSSAVSSPTQPGPV) is disordered. Positions 328-338 (LQPSSAVSSPT) are enriched in polar residues. Phosphoserine occurs at positions 374, 378, 385, and 631. Positions 643-723 (GAAELARLRQ…QEELERLHAG (81 aa)) form a coiled coil. Residues 766 to 801 (SVKCLKCQEQKRAVLPCQHAALCELCAEGSECPICQ) form an RING-type; degenerate zinc finger.

The protein belongs to the unkempt family.

The protein localises to the cytoplasm. Its function is as follows. Sequence-specific RNA-binding protein which plays an important role in the establishment and maintenance of the early morphology of cortical neurons during embryonic development. Acts as a translation repressor and controls a translationally regulated cell morphology program to ensure proper structuring of the nervous system. Translational control depends on recognition of its binding element within target mRNAs which consists of a mandatory UAG trimer upstream of a U/A-rich motif. Associated with polysomes. The sequence is that of RING finger protein unkempt homolog (UNK) from Homo sapiens (Human).